Here is a 158-residue protein sequence, read N- to C-terminus: U-limacoditoxin(8)-Dv66 (158 aa).

The signal sequence occupies residues 1-24; sequence MALRAPWIALCCVLAVLFVVPAAT. Residues 25–32 constitute a propeptide that is removed on maturation; the sequence is RDEERQKR. 2 tandem repeats follow at residues 33-78 and 79-124. The 3 X 46 AA tandem repeats stretch occupies residues 33–158; sequence GVDFGLQRGF…AQDPHGPGRK (126 aa). Proline 63 is modified (proline amide). The propeptide occupies 64–78; the sequence is GRKRRDAYEMERQKR. A disordered region spans residues 101–120; the sequence is ARAQDPHGPGRKRRDAYEME. Proline 109 is subject to Proline amide. Positions 110–124 are excised as a propeptide; sequence GRKRRDAYEMERQKR. A 3; half-length repeat occupies 125–158; it reads GVDFGLQRGFSGSELAKLKLALARAQDPHGPGRK. Proline 155 bears the Proline amide mark.

The protein belongs to the diuretic hormone class 2 family. As to expression, expressed by the venom secretory cell of the spine. The spine is a cuticular structure containing a single large nucleated venom-secreting cell at its base. It is an independent unit capable of producing, storing and injecting venom. On the back of D.vulnerans caterpillars, spines are grouped together by 50 to 100 to form scoli, of which there are eight in D.vulnerans.

It localises to the secreted. In terms of biological role, probable toxin. Does not show insecticidal, antimicrobial and antiparasitic activities. Does not induce increase in intracellular calcium in mouse DRG neurons, suggesting that it does not induce pain. In Doratifera vulnerans (Mottled cup moth), this protein is U-limacoditoxin(8)-Dv66.